The chain runs to 234 residues: MATHRKHLVRDFNRYITCSICRGYLIKPTAVTECLHTFCKSCIVQHFEESNECPECGIQVHETNPLEMLRLDKTLEEIIFKLVPGLREKEEHQESEFWRKHKIKSNGEDGPRAKKSRLSGEDDDGNGGDYHRSDPQIAICLDCLRNNGQSGESIVKGLMKKFIRCSTRVTVGTIKKFLCVKLKLPSSYELDVLCNGEIMGKDHTLEFIYRTRWRLQGDSAYPMVLEYRPRIDFG.

The segment at Cys-18 to Gly-57 adopts an RING-type zinc-finger fold. Residues Phe-97–Tyr-130 form a disordered region.

Component of a PRC1-like complex.

The protein localises to the nucleus. Functionally, component of Polycomb group (PcG) multiprotein complexes; the complex class is required to maintain the transcriptionally repressive state of some genes. The protein is Polycomb group RING finger protein 5-A of Danio rerio (Zebrafish).